The chain runs to 420 residues: MNSAFFEELKARGLVYQVTDEEALQKQLNEESVKLYIGFDPTADSLHIGHLLPILMLRRFQQNGHVPIALVGGGTGMIGDPSFKDAERSLNTLDTVKAWSESIKGQLSRFIDFEDEKNPAILANNYDWLGELSLIDFLRDVGKNFTINYMMSKESVKRRIETGISYTEFAYQLLQAYDFLKLYETEGCLLQLGGSDQWGNITSGIELLRREQEVQGFGLTMPLITKADGTKFGKTEGNAVWLDAEKTSPYEFYQFWINTDDRDVVKFLKYFTFLTLDEIATIEEEFTANPGQRAAQKALAKEVTTLVHGEAAYHQAVKISEALFSGDIQSLTAEEIKQGFKDVPTYEVQPEDQLSLVDLLVTSKIEPSKRQAREDVQNGAIYVNGERRQDLAAELTETDKIEGQFTVIRRGKKKYFLLKY.

Tyr36 contributes to the L-tyrosine binding site. The 'HIGH' region motif lies at 41–50; it reads PTADSLHIGH. L-tyrosine-binding residues include Tyr171 and Gln175. The short motif at 231-235 is the 'KMSKS' region element; that stretch reads KFGKT. An ATP-binding site is contributed by Lys234. In terms of domain architecture, S4 RNA-binding spans 354–420; that stretch reads LSLVDLLVTS…GKKKYFLLKY (67 aa).

This sequence belongs to the class-I aminoacyl-tRNA synthetase family. TyrS type 1 subfamily. As to quaternary structure, homodimer.

The protein localises to the cytoplasm. The enzyme catalyses tRNA(Tyr) + L-tyrosine + ATP = L-tyrosyl-tRNA(Tyr) + AMP + diphosphate + H(+). Its function is as follows. Catalyzes the attachment of tyrosine to tRNA(Tyr) in a two-step reaction: tyrosine is first activated by ATP to form Tyr-AMP and then transferred to the acceptor end of tRNA(Tyr). The chain is Tyrosine--tRNA ligase 2 from Enterococcus faecalis (strain ATCC 700802 / V583).